A 233-amino-acid chain; its full sequence is tRNA (guanine-N(7)-)-methyltransferase (233 aa).

Residues 1–22 (MIDENHPMRAAGNFFGRRHGKP) are disordered. Glu-64, Glu-89, Asp-116, and Asp-138 together coordinate S-adenosyl-L-methionine. Residue Asp-138 is part of the active site. Residues Lys-142, Asp-174, and 212–215 (TRYE) each bind substrate.

The protein belongs to the class I-like SAM-binding methyltransferase superfamily. TrmB family.

The enzyme catalyses guanosine(46) in tRNA + S-adenosyl-L-methionine = N(7)-methylguanosine(46) in tRNA + S-adenosyl-L-homocysteine. It participates in tRNA modification; N(7)-methylguanine-tRNA biosynthesis. Its function is as follows. Catalyzes the formation of N(7)-methylguanine at position 46 (m7G46) in tRNA. In Brucella abortus (strain 2308), this protein is tRNA (guanine-N(7)-)-methyltransferase.